The primary structure comprises 75 residues: RNA-binding protein KhpA (75 aa).

The KH domain occupies 29–75 (KVVYHLTVHPDDVGKVIGKNGRIAKAIRTVVYASKTDGNKRIYLDIM).

This sequence belongs to the KhpA RNA-binding protein family. Forms a complex with KhpB.

Its subcellular location is the cytoplasm. Functionally, a probable RNA chaperone. Forms a complex with KhpB which binds to cellular RNA and controls its expression. Plays a role in peptidoglycan (PG) homeostasis and cell length regulation. The sequence is that of RNA-binding protein KhpA from Oceanobacillus iheyensis (strain DSM 14371 / CIP 107618 / JCM 11309 / KCTC 3954 / HTE831).